The chain runs to 142 residues: Glia maturation factor beta (142 aa).

Serine 2 carries the N-acetylserine modification. The ADF-H domain maps to 4–139; it reads SLVVCDVAED…TEEWLREKLG (136 aa).

This sequence belongs to the actin-binding proteins ADF family. GMF subfamily. Phosphorylated; stimulated by phorbol ester.

Its function is as follows. This protein causes differentiation of brain cells, stimulation of neural regeneration, and inhibition of proliferation of tumor cells. The polypeptide is Glia maturation factor beta (Gmfb) (Rattus norvegicus (Rat)).